The sequence spans 779 residues: Probable ATP-dependent RNA helicase DHX40 (779 aa).

The tract at residues 1 to 53 is disordered; the sequence is MSRFPAVAGRAPRRQEEGERSRDLQEERPSAVCIADREEKGCTSQEGGTTPTF. Residues 13-41 are compositionally biased toward basic and acidic residues; the sequence is RRQEEGERSRDLQEERPSAVCIADREEKG. The segment covering 42–53 has biased composition (polar residues); that stretch reads CTSQEGGTTPTF. The Helicase ATP-binding domain occupies 63-231; it reads IQAVRDNSFL…FGNCPIFDIP (169 aa). 76 to 83 serves as a coordination point for ATP; the sequence is GNTGSGKT. The short motif at 173 to 176 is the DEAH box element; that stretch reads DEAH. The Helicase C-terminal domain maps to 263–442; sequence TMDIHLNEMA…SVVLTLKCLA (180 aa). Positions 737–779 are disordered; the sequence is SKDVLKKMQRRNDDKSISDARARFLERKQQRTQDHSDTRKETG.

The protein belongs to the DEAD box helicase family. DEAH subfamily.

The enzyme catalyses ATP + H2O = ADP + phosphate + H(+). In terms of biological role, probable ATP-dependent RNA helicase. The protein is Probable ATP-dependent RNA helicase DHX40 (DHX40) of Pongo abelii (Sumatran orangutan).